Reading from the N-terminus, the 389-residue chain is S-adenosylmethionine synthase (389 aa).

His-17 lines the ATP pocket. Asp-19 lines the Mg(2+) pocket. Residue Glu-45 coordinates K(+). L-methionine contacts are provided by Glu-58 and Gln-101. The interval 101–111 (QSPDISQGVTE) is flexible loop. ATP is bound by residues 168-170 (DSK), 234-235 (RF), Asp-243, 249-250 (RK), Ala-266, and Lys-270. Position 243 (Asp-243) interacts with L-methionine. An L-methionine-binding site is contributed by Lys-274.

It belongs to the AdoMet synthase family. Homotetramer; dimer of dimers. The cofactor is Mg(2+). K(+) serves as cofactor.

It is found in the cytoplasm. The catalysed reaction is L-methionine + ATP + H2O = S-adenosyl-L-methionine + phosphate + diphosphate. Its pathway is amino-acid biosynthesis; S-adenosyl-L-methionine biosynthesis; S-adenosyl-L-methionine from L-methionine: step 1/1. Its function is as follows. Catalyzes the formation of S-adenosylmethionine (AdoMet) from methionine and ATP. The overall synthetic reaction is composed of two sequential steps, AdoMet formation and the subsequent tripolyphosphate hydrolysis which occurs prior to release of AdoMet from the enzyme. This Geobacter sulfurreducens (strain ATCC 51573 / DSM 12127 / PCA) protein is S-adenosylmethionine synthase.